A 366-amino-acid polypeptide reads, in one-letter code: Alanine racemase (366 aa).

K33 serves as the catalytic Proton acceptor; specific for D-alanine. K33 carries the post-translational modification N6-(pyridoxal phosphate)lysine. R129 is a substrate binding site. Catalysis depends on Y253, which acts as the Proton acceptor; specific for L-alanine. M301 provides a ligand contact to substrate.

Belongs to the alanine racemase family. The cofactor is pyridoxal 5'-phosphate.

It carries out the reaction L-alanine = D-alanine. It functions in the pathway amino-acid biosynthesis; D-alanine biosynthesis; D-alanine from L-alanine: step 1/1. In terms of biological role, catalyzes the interconversion of L-alanine and D-alanine. May also act on other amino acids. This chain is Alanine racemase (alr), found in Xanthomonas axonopodis pv. citri (strain 306).